The chain runs to 666 residues: Zinc finger MYM-type protein 5 (666 aa).

Residues Lys-85, Lys-88, Lys-146, and Lys-163 each participate in a glycyl lysine isopeptide (Lys-Gly) (interchain with G-Cter in SUMO2) cross-link. Residues 87-106 (EKPQGNYSVIPPPSRDLASQ) form a disordered region. The tract at residues 191 to 212 (SPDSWISQSASFPRNQKQPGVD) is disordered. Over residues 194-208 (SWISQSASFPRNQKQ) the composition is skewed to polar residues. Lys-222 is covalently cross-linked (Glycyl lysine isopeptide (Lys-Gly) (interchain with G-Cter in SUMO2)). MYM-type zinc fingers lie at residues 262–296 (HLFCCTTCLSSFSHKRTQNTRSVICKKFASTKKAD), 308–348 (QEFC…RHEV), 355–390 (HKLCSNHCFNKYRLANGLIMNCCEHCGEYMPSKSTG), and 401–428 (KRFCCQSCINEYKQMMETKSKKLTASEN). Glycyl lysine isopeptide (Lys-Gly) (interchain with G-Cter in SUMO2) cross-links involve residues Lys-440, Lys-452, Lys-459, and Lys-549.

Interacts (via N-terminal 120 amino acid region) with ETV5 (via C-terminal).

Its subcellular location is the nucleus. Functionally, functions as a transcriptional regulator. The polypeptide is Zinc finger MYM-type protein 5 (ZMYM5) (Macaca fascicularis (Crab-eating macaque)).